The following is a 442-amino-acid chain: tRNA modification GTPase MnmE (442 aa).

(6S)-5-formyl-5,6,7,8-tetrahydrofolate-binding residues include Arg21, Glu79, and Lys118. Residues 214-367 (GFKIAIVGKP…LKEELQNYLN (154 aa)) form the TrmE-type G domain. Residue Asn224 participates in K(+) binding. GTP contacts are provided by residues 224–229 (NVGKSS), 243–249 (SDIAGTT), and 268–271 (DTAG). Mg(2+) is bound at residue Ser228. K(+)-binding residues include Ser243, Ile245, and Thr248. Thr249 lines the Mg(2+) pocket. Lys442 contributes to the (6S)-5-formyl-5,6,7,8-tetrahydrofolate binding site.

The protein belongs to the TRAFAC class TrmE-Era-EngA-EngB-Septin-like GTPase superfamily. TrmE GTPase family. As to quaternary structure, homodimer. Heterotetramer of two MnmE and two MnmG subunits. The cofactor is K(+).

It is found in the cytoplasm. Exhibits a very high intrinsic GTPase hydrolysis rate. Involved in the addition of a carboxymethylaminomethyl (cmnm) group at the wobble position (U34) of certain tRNAs, forming tRNA-cmnm(5)s(2)U34. This chain is tRNA modification GTPase MnmE, found in Campylobacter jejuni subsp. jejuni serotype O:2 (strain ATCC 700819 / NCTC 11168).